The primary structure comprises 188 residues: UPF0301 protein Mmwyl1_0539 (188 aa).

The protein belongs to the UPF0301 (AlgH) family.

This chain is UPF0301 protein Mmwyl1_0539, found in Marinomonas sp. (strain MWYL1).